The primary structure comprises 179 residues: Acireductone dioxygenase (179 aa).

H99, H101, E105, and H144 together coordinate Fe(2+). Positions 99, 101, 105, and 144 each coordinate Ni(2+).

The protein belongs to the acireductone dioxygenase (ARD) family. In terms of assembly, monomer. Requires Fe(2+) as cofactor. The cofactor is Ni(2+).

It catalyses the reaction 1,2-dihydroxy-5-(methylsulfanyl)pent-1-en-3-one + O2 = 3-(methylsulfanyl)propanoate + CO + formate + 2 H(+). The enzyme catalyses 1,2-dihydroxy-5-(methylsulfanyl)pent-1-en-3-one + O2 = 4-methylsulfanyl-2-oxobutanoate + formate + 2 H(+). Its pathway is amino-acid biosynthesis; L-methionine biosynthesis via salvage pathway; L-methionine from S-methyl-5-thio-alpha-D-ribose 1-phosphate: step 5/6. Its function is as follows. Catalyzes 2 different reactions between oxygen and the acireductone 1,2-dihydroxy-3-keto-5-methylthiopentene (DHK-MTPene) depending upon the metal bound in the active site. Fe-containing acireductone dioxygenase (Fe-ARD) produces formate and 2-keto-4-methylthiobutyrate (KMTB), the alpha-ketoacid precursor of methionine in the methionine recycle pathway. Ni-containing acireductone dioxygenase (Ni-ARD) produces methylthiopropionate, carbon monoxide and formate, and does not lie on the methionine recycle pathway. The polypeptide is Acireductone dioxygenase (Exiguobacterium sibiricum (strain DSM 17290 / CCUG 55495 / CIP 109462 / JCM 13490 / 255-15)).